We begin with the raw amino-acid sequence, 491 residues long: Glutamate--tRNA ligase (491 aa).

The 'HIGH' region signature appears at 13 to 23 (PSPTGFLHIGN). Zn(2+) is bound by residues cysteine 110, cysteine 112, cysteine 137, and histidine 139. The 'KMSKS' region signature appears at 254–258 (KLSKR). Lysine 257 is an ATP binding site.

Belongs to the class-I aminoacyl-tRNA synthetase family. Glutamate--tRNA ligase type 1 subfamily. As to quaternary structure, monomer. It depends on Zn(2+) as a cofactor.

Its subcellular location is the cytoplasm. The catalysed reaction is tRNA(Glu) + L-glutamate + ATP = L-glutamyl-tRNA(Glu) + AMP + diphosphate. Catalyzes the attachment of glutamate to tRNA(Glu) in a two-step reaction: glutamate is first activated by ATP to form Glu-AMP and then transferred to the acceptor end of tRNA(Glu). The polypeptide is Glutamate--tRNA ligase (Listeria welshimeri serovar 6b (strain ATCC 35897 / DSM 20650 / CCUG 15529 / CIP 8149 / NCTC 11857 / SLCC 5334 / V8)).